We begin with the raw amino-acid sequence, 885 residues long: Dual serine/threonine and tyrosine protein kinase (885 aa).

Positions 614-868 (PKLGRELGRG…PLLGIVQPGL (255 aa)) constitute a Protein kinase domain. ATP is bound by residues 620-628 (LGRGQYGVV) and Lys643. The Proton acceptor role is filled by Asp739.

Belongs to the protein kinase superfamily. Ser/Thr protein kinase family.

Its subcellular location is the cytoplasm. It is found in the cell membrane. The protein resides in the apical cell membrane. The protein localises to the basolateral cell membrane. It localises to the cell junction. It catalyses the reaction L-seryl-[protein] + ATP = O-phospho-L-seryl-[protein] + ADP + H(+). It carries out the reaction L-threonyl-[protein] + ATP = O-phospho-L-threonyl-[protein] + ADP + H(+). The enzyme catalyses L-tyrosyl-[protein] + ATP = O-phospho-L-tyrosyl-[protein] + ADP + H(+). May act as a positive regulator of ERK phosphorylation downstream of fibroblast growth factor-receptor activation. May induce both caspase-dependent apoptosis and caspase-independent cell death. Plays a role in the embryonic development. The protein is Dual serine/threonine and tyrosine protein kinase (dstyk) of Danio rerio (Zebrafish).